A 41-amino-acid polypeptide reads, in one-letter code: Inducible serine protease inhibitor 3 (41 aa).

Functionally, inhibits trypsin and the toxin proteases PR1 and PR2 of M.anisopliae. Does not inhibit chymotrypsin, subtilisin Carlsberg, proteinase K and porcine pancreatic elastase. The protein is Inducible serine protease inhibitor 3 of Galleria mellonella (Greater wax moth).